A 479-amino-acid chain; its full sequence is UDP-glycosyltransferase 85A8 (479 aa).

UDP-alpha-D-glucose is bound by residues S302, 358-359, 376-384, and 398-401; these read WC, HSGWNSTIE, and FAEQ.

This sequence belongs to the UDP-glycosyltransferase family.

Functionally, may glycosylate diterpenes or flavonols in leaves. This is UDP-glycosyltransferase 85A8 from Stevia rebaudiana (Stevia).